A 306-amino-acid chain; its full sequence is Dihydroorotate dehydrogenase B (NAD(+)), catalytic subunit (306 aa).

Residues Ser-24 and Lys-48–Ala-49 contribute to the FMN site. Substrate is bound by residues Lys-48 and Asn-72 to Leu-76. Positions 102 and 130 each coordinate FMN. Asn-130 contacts substrate. Catalysis depends on Cys-133, which acts as the Nucleophile. Lys-168 and Ile-194 together coordinate FMN. Asn-195–Thr-196 is a substrate binding site. FMN contacts are provided by residues Gly-220, Gly-246 to Gly-247, and Gly-268 to Thr-269.

The protein belongs to the dihydroorotate dehydrogenase family. Type 1 subfamily. As to quaternary structure, heterotetramer of 2 PyrK and 2 PyrD type B subunits. It depends on FMN as a cofactor.

It is found in the cytoplasm. The catalysed reaction is (S)-dihydroorotate + NAD(+) = orotate + NADH + H(+). It participates in pyrimidine metabolism; UMP biosynthesis via de novo pathway; orotate from (S)-dihydroorotate (NAD(+) route): step 1/1. Its function is as follows. Catalyzes the conversion of dihydroorotate to orotate with NAD(+) as electron acceptor. The chain is Dihydroorotate dehydrogenase B (NAD(+)), catalytic subunit (pyrD) from Malacoplasma penetrans (strain HF-2) (Mycoplasma penetrans).